We begin with the raw amino-acid sequence, 574 residues long: Pescadillo homolog (574 aa).

Residues 289-312 (PSEPNDDTEVDEFPADPENAGLEE) are disordered. Acidic residues predominate over residues 292–303 (PNDDTEVDEFPA). In terms of domain architecture, BRCT spans 323–416 (KHKSLFVGLK…LLLPVEDYFP (94 aa)). Residues 452–486 (LGLDEEDDDDDDDDEEEDDDDDEEEEDKKLRQLEN) are disordered. A compositionally biased stretch (acidic residues) spans 453–477 (GLDEEDDDDDDDDEEEDDDDDEEEE).

The protein belongs to the pescadillo family. In terms of assembly, component of the PeBoW complex, composed of bop1, pes1 and wdr12. The complex is held together by bop1, which interacts with pes1 via its N-terminal domain and with wdr12 via a high-affinity interaction between the seven-bladed beta-propeller domains of the 2 proteins. The PeBoW complex associates with the 66S pre-ribosome.

The protein localises to the nucleus. The protein resides in the nucleolus. It is found in the nucleoplasm. In terms of biological role, component of the PeBoW complex, which is required for maturation of 28S and 5.8S ribosomal RNAs and formation of the 60S ribosome. Required for neural crest migration and eye development. The polypeptide is Pescadillo homolog (pes1) (Xenopus laevis (African clawed frog)).